The primary structure comprises 838 residues: Alpha-glucan phosphorylase, H isozyme (838 aa).

The tract at residues 1–21 is disordered; that stretch reads MEGGAKSNDVSAAPIAQPLSE. Lys684 bears the N6-(pyridoxal phosphate)lysine mark.

Belongs to the glycogen phosphorylase family. Pyridoxal 5'-phosphate serves as cofactor.

It localises to the cytoplasm. The catalysed reaction is [(1-&gt;4)-alpha-D-glucosyl](n) + phosphate = [(1-&gt;4)-alpha-D-glucosyl](n-1) + alpha-D-glucose 1-phosphate. Its function is as follows. Phosphorylase is an important allosteric enzyme in carbohydrate metabolism. Enzymes from different sources differ in their regulatory mechanisms and in their natural substrates. However, all known phosphorylases share catalytic and structural properties. In Solanum tuberosum (Potato), this protein is Alpha-glucan phosphorylase, H isozyme.